The following is a 534-amino-acid chain: GTPase Obg (534 aa).

An Obg domain is found at Ala-2–Ile-159. The interval Ala-63–Lys-82 is disordered. Over residues Gly-71–Lys-82 the composition is skewed to gly residues. The OBG-type G domain maps to Ala-160–Thr-343. Residues Gly-166–Ser-173, Phe-191–Ile-195, Asp-212–Gly-215, Asn-295–Asp-298, and Ser-324–Ser-326 each bind GTP. Residues Ser-173 and Thr-193 each coordinate Mg(2+). The 87-residue stretch at Pro-363 to Pro-449 folds into the OCT domain. Positions Glu-456–Leu-534 are disordered. Composition is skewed to basic and acidic residues over residues Thr-464 to Ala-504 and Ser-512 to Ala-526.

Belongs to the TRAFAC class OBG-HflX-like GTPase superfamily. OBG GTPase family. Monomer. Requires Mg(2+) as cofactor.

It localises to the cytoplasm. An essential GTPase which binds GTP, GDP and possibly (p)ppGpp with moderate affinity, with high nucleotide exchange rates and a fairly low GTP hydrolysis rate. Plays a role in control of the cell cycle, stress response, ribosome biogenesis and in those bacteria that undergo differentiation, in morphogenesis control. This chain is GTPase Obg, found in Renibacterium salmoninarum (strain ATCC 33209 / DSM 20767 / JCM 11484 / NBRC 15589 / NCIMB 2235).